We begin with the raw amino-acid sequence, 164 residues long: MMSALSQAAKSLLLQDFVSAFFLSMRQFFAPKETINYPHEKGPVSPRFRGEHALRRYPNGEERCIACKLCEAICPAQAITIEAGPRRNDGTRRTVRYDIDMVKCIYCGFCQEACPVDAIVEGPNFEFATETREELYYDKDKLLANGDRWERELARNISLDAPYR.

4Fe-4S ferredoxin-type domains follow at residues 54–84 and 95–124; these read LRRY…IEAG and VRYD…EGPN. Residues Cys64, Cys67, Cys70, Cys74, Cys104, Cys107, Cys110, and Cys114 each coordinate [4Fe-4S] cluster.

This sequence belongs to the complex I 23 kDa subunit family. In terms of assembly, NDH-1 is composed of 14 different subunits. Subunits NuoA, H, J, K, L, M, N constitute the membrane sector of the complex. Requires [4Fe-4S] cluster as cofactor.

It localises to the cell inner membrane. The catalysed reaction is a quinone + NADH + 5 H(+)(in) = a quinol + NAD(+) + 4 H(+)(out). Functionally, NDH-1 shuttles electrons from NADH, via FMN and iron-sulfur (Fe-S) centers, to quinones in the respiratory chain. The immediate electron acceptor for the enzyme in this species is believed to be ubiquinone. Couples the redox reaction to proton translocation (for every two electrons transferred, four hydrogen ions are translocated across the cytoplasmic membrane), and thus conserves the redox energy in a proton gradient. The polypeptide is NADH-quinone oxidoreductase subunit I (Mesorhizobium japonicum (strain LMG 29417 / CECT 9101 / MAFF 303099) (Mesorhizobium loti (strain MAFF 303099))).